A 177-amino-acid chain; its full sequence is Flavodoxin (177 aa).

The Flavodoxin-like domain maps to Ile-4 to Lys-173.

The protein belongs to the flavodoxin family. FMN serves as cofactor.

In terms of biological role, low-potential electron donor to a number of redox enzymes. NifF is the electron donor to nitrogenase. This is Flavodoxin (nifF) from Enterobacter agglomerans (Erwinia herbicola).